We begin with the raw amino-acid sequence, 229 residues long: GTP cyclohydrolase 1 (229 aa).

Positions 116, 119, and 187 each coordinate Zn(2+).

It belongs to the GTP cyclohydrolase I family. Toroid-shaped homodecamer, composed of two pentamers of five dimers.

It catalyses the reaction GTP + H2O = 7,8-dihydroneopterin 3'-triphosphate + formate + H(+). It functions in the pathway cofactor biosynthesis; 7,8-dihydroneopterin triphosphate biosynthesis; 7,8-dihydroneopterin triphosphate from GTP: step 1/1. In Synechococcus sp. (strain JA-3-3Ab) (Cyanobacteria bacterium Yellowstone A-Prime), this protein is GTP cyclohydrolase 1.